Here is a 301-residue protein sequence, read N- to C-terminus: Tetratricopeptide repeat domain-containing protein PYG7, chloroplastic (301 aa).

The transit peptide at 1-61 directs the protein to the chloroplast; it reads MFESNMVLQT…FHDYVFAEIS (61 aa). 2 consecutive transmembrane segments (helical) span residues 82 to 102 and 121 to 141; these read TFLLGQSLLMVSAHPQLAAAA and IQLSYLLLLLGLLGVGTFYVI. TPR repeat units lie at residues 168-201, 206-239, and 240-273; these read ATELFELGAVMLRRKFYPAANKFLQQAIQKWDGD, AQVYNALGVSYVREDKLDKGIAQFEMAVKLQPGY, and VTAWNNLGDAYEKKKELPLALNAFEEVLLFDPNN.

In terms of assembly, interacts with PSA3.

The protein localises to the plastid. The protein resides in the chloroplast thylakoid membrane. Functionally, nuclear genome-encoded factor required for the accumulation of photosystem I (PSI). Functions as a PSI biogenesis factor. Cooperates with PSA3 to promote the stable assembly of PSI in the thylakoid membrane. May target primarily the PsaC subunit. The protein is Tetratricopeptide repeat domain-containing protein PYG7, chloroplastic of Arabidopsis thaliana (Mouse-ear cress).